The chain runs to 95 residues: UPF0358 protein BCE_3996 (95 aa).

This sequence belongs to the UPF0358 family.

This Bacillus cereus (strain ATCC 10987 / NRS 248) protein is UPF0358 protein BCE_3996.